We begin with the raw amino-acid sequence, 239 residues long: tRNA (guanine-N(1)-)-methyltransferase (239 aa).

Residues G109 and 128-133 (IGDYVL) contribute to the S-adenosyl-L-methionine site.

It belongs to the RNA methyltransferase TrmD family. Homodimer.

Its subcellular location is the cytoplasm. It catalyses the reaction guanosine(37) in tRNA + S-adenosyl-L-methionine = N(1)-methylguanosine(37) in tRNA + S-adenosyl-L-homocysteine + H(+). Its function is as follows. Specifically methylates guanosine-37 in various tRNAs. The chain is tRNA (guanine-N(1)-)-methyltransferase from Thermus thermophilus (strain ATCC 27634 / DSM 579 / HB8).